The following is a 173-amino-acid chain: 3-isopropylmalate dehydratase small subunit (173 aa).

This sequence belongs to the LeuD family. LeuD type 2 subfamily. In terms of assembly, heterodimer of LeuC and LeuD.

It carries out the reaction (2R,3S)-3-isopropylmalate = (2S)-2-isopropylmalate. It participates in amino-acid biosynthesis; L-leucine biosynthesis; L-leucine from 3-methyl-2-oxobutanoate: step 2/4. Functionally, catalyzes the isomerization between 2-isopropylmalate and 3-isopropylmalate, via the formation of 2-isopropylmaleate. The sequence is that of 3-isopropylmalate dehydratase small subunit from Caldicellulosiruptor saccharolyticus (strain ATCC 43494 / DSM 8903 / Tp8T 6331).